Reading from the N-terminus, the 247-residue chain is MSYDRAITVFSPDGHLFQVEYAQEAVRKGLCAVGVKGKDSIIFAVEKKSVQKLQDSRTTRKIYKLDEHIYLASAGLSADARVVVNHAQLECQRFRLSYEDAIDVDLLVRYVARVQQRSTQSSGSRPYGVSTIIGGFNENGQPQLWKTEPSGTSSAWNAAAIGRNDKVVLEFMEKNYQDGMTRDRCVHFAIKALLEAVESGSKNIELLVLERGKAAYMSDTELHRFVVEVEKEREEEAARRRRLAEED.

It belongs to the peptidase T1A family. As to quaternary structure, the 26S proteasome consists of a 20S proteasome core and two 19S regulatory subunits. The 20S proteasome core is composed of 28 subunits that are arranged in four stacked rings, resulting in a barrel-shaped structure. The two end rings are each formed by seven alpha subunits, and the two central rings are each formed by seven beta subunits. The catalytic chamber with the active sites is on the inside of the barrel.

The protein resides in the cytoplasm. It localises to the nucleus. Functionally, the proteasome is a multicatalytic proteinase complex which is characterized by its ability to cleave peptides with Arg, Phe, Tyr, Leu, and Glu adjacent to the leaving group at neutral or slightly basic pH. The proteasome has an ATP-dependent proteolytic activity. This is Proteasome subunit alpha type-7 (PSA4) from Trypanosoma brucei brucei.